Consider the following 984-residue polypeptide: Mineralocorticoid receptor (984 aa).

Residues methionine 1–isoleucine 602 form a modulating region. The span at glutamine 231–asparagine 243 shows a compositional bias: polar residues. 2 disordered regions span residues glutamine 231–threonine 329 and glycine 347–proline 373. 5 positions are modified to phosphoserine: serine 250, serine 259, serine 283, serine 287, and serine 299. A compositionally biased stretch (low complexity) spans serine 259 to valine 291. The segment covering threonine 292–threonine 329 has biased composition (polar residues). Zn(2+) is bound by residues cysteine 603, cysteine 606, cysteine 620, cysteine 623, cysteine 639, cysteine 645, cysteine 655, and cysteine 658. NR C4-type zinc fingers lie at residues cysteine 603–cysteine 623 and cysteine 639–cysteine 663. The segment at residues cysteine 603–methionine 668 is a DNA-binding region (nuclear receptor). Residues asparagine 669–proline 725 are hinge. Positions isoleucine 684–tyrosine 710 are disordered. A compositionally biased stretch (pro residues) spans glutamine 692 to serine 703. The region spanning glutamine 726–isoleucine 964 is the NR LBD domain. 21-hydroxyprogesterone is bound by residues asparagine 770 and glutamine 776. Positions 770 and 776 each coordinate aldosterone. 2 residues coordinate progesterone: asparagine 770 and glutamine 776. Positions lysine 782 to lysine 785 are important for coactivator binding. 21-hydroxyprogesterone contacts are provided by arginine 817 and threonine 945. Residues arginine 817 and threonine 945 each coordinate aldosterone. Progesterone is bound by residues arginine 817 and threonine 945.

Belongs to the nuclear hormone receptor family. NR3 subfamily. Heteromultimeric cytoplasmic complex with HSP90, HSP70, and FKBP4, in the absence of ligand. After ligand binding, it translocates to the nucleus and binds to DNA as a homodimer and as a heterodimer with NR3C1. May interact with HSD11B2 in the absence of ligand. Binds the coactivators NCOA1, NCOA2, TIF1 and NRIP1. In terms of processing, phosphorylated. As to expression, ubiquitous. Highly expressed in distal tubules, convoluted tubules and cortical collecting duct in kidney, and in sweat glands. Detected at lower levels in cardiomyocytes, in epidermis and in colon enterocytes.

The protein resides in the cytoplasm. Its subcellular location is the nucleus. The protein localises to the endoplasmic reticulum membrane. Receptor for both mineralocorticoids (MC) such as aldosterone and glucocorticoids (GC) such as corticosterone or cortisol. Binds to mineralocorticoid response elements (MRE) and transactivates target genes. The effect of MC is to increase ion and water transport and thus raise extracellular fluid volume and blood pressure and lower potassium levels. This Homo sapiens (Human) protein is Mineralocorticoid receptor (NR3C2).